Reading from the N-terminus, the 396-residue chain is Putative cyclin-B3-1 (396 aa).

Positions 1–98 (MLRDGNKQSK…KVLDVTAKPK (98 aa)) are disordered. Positions 21-32 (KTTVKTSLQNRS) are enriched in polar residues. Residues 39-57 (VGRSKSRSISSIPSSAVAS) show a composition bias toward low complexity. Residues 76 to 85 (GESSSSGNKD) are compositionally biased toward polar residues.

It belongs to the cyclin family. Cyclin AB subfamily.

This Arabidopsis thaliana (Mouse-ear cress) protein is Putative cyclin-B3-1 (CYCB3-1).